Reading from the N-terminus, the 331-residue chain is Lipoyl synthase (331 aa).

The tract at residues M1–A33 is disordered. Over residues A7–Q19 the composition is skewed to low complexity. Residues D21–A33 show a composition bias toward basic and acidic residues. 7 residues coordinate [4Fe-4S] cluster: C78, C83, C89, C104, C108, C111, and S318. The region spanning C89–T307 is the Radical SAM core domain.

The protein belongs to the radical SAM superfamily. Lipoyl synthase family. [4Fe-4S] cluster serves as cofactor.

The protein resides in the cytoplasm. The enzyme catalyses [[Fe-S] cluster scaffold protein carrying a second [4Fe-4S](2+) cluster] + N(6)-octanoyl-L-lysyl-[protein] + 2 oxidized [2Fe-2S]-[ferredoxin] + 2 S-adenosyl-L-methionine + 4 H(+) = [[Fe-S] cluster scaffold protein] + N(6)-[(R)-dihydrolipoyl]-L-lysyl-[protein] + 4 Fe(3+) + 2 hydrogen sulfide + 2 5'-deoxyadenosine + 2 L-methionine + 2 reduced [2Fe-2S]-[ferredoxin]. The protein operates within protein modification; protein lipoylation via endogenous pathway; protein N(6)-(lipoyl)lysine from octanoyl-[acyl-carrier-protein]: step 2/2. Catalyzes the radical-mediated insertion of two sulfur atoms into the C-6 and C-8 positions of the octanoyl moiety bound to the lipoyl domains of lipoate-dependent enzymes, thereby converting the octanoylated domains into lipoylated derivatives. In Cupriavidus pinatubonensis (strain JMP 134 / LMG 1197) (Cupriavidus necator (strain JMP 134)), this protein is Lipoyl synthase.